The chain runs to 219 residues: NAD(P)H-quinone oxidoreductase subunit I (219 aa).

4Fe-4S ferredoxin-type domains are found at residues Gly55–Val84 and Arg95–Glu124. Residues Cys64, Cys67, Cys70, Cys74, Cys104, Cys107, Cys110, and Cys114 each coordinate [4Fe-4S] cluster.

Belongs to the complex I 23 kDa subunit family. NDH-1 is composed of at least 11 different subunits. The cofactor is [4Fe-4S] cluster.

The protein resides in the cellular thylakoid membrane. The enzyme catalyses a plastoquinone + NADH + (n+1) H(+)(in) = a plastoquinol + NAD(+) + n H(+)(out). It catalyses the reaction a plastoquinone + NADPH + (n+1) H(+)(in) = a plastoquinol + NADP(+) + n H(+)(out). Its function is as follows. NDH-1 shuttles electrons from an unknown electron donor, via FMN and iron-sulfur (Fe-S) centers, to quinones in the respiratory and/or the photosynthetic chain. The immediate electron acceptor for the enzyme in this species is believed to be plastoquinone. Couples the redox reaction to proton translocation, and thus conserves the redox energy in a proton gradient. This is NAD(P)H-quinone oxidoreductase subunit I from Prochlorococcus marinus (strain SARG / CCMP1375 / SS120).